The primary structure comprises 494 residues: Transcription termination factor MTERF4, chloroplastic (494 aa).

A chloroplast-targeting transit peptide spans 1–54; it reads MMKSLLFSAHPTSLLLPAPRLRRLLRLRAASSASASAPPRADRRSPGTPSRRPS. Disordered stretches follow at residues 32–61 and 457–494; these read SASA…YARP and VEEM…EFVR. Low complexity predominate over residues 46–56; that stretch reads PGTPSRRPSSS. 2 stretches are compositionally biased toward acidic residues: residues 457 to 466 and 473 to 494; these read VEEMEREDSS and DEVE…EFVR.

Belongs to the mTERF family.

Its subcellular location is the plastid. The protein localises to the chloroplast stroma. Its function is as follows. Transcription termination factor required for processing and steady-state levels of plastid transcripts. Required for splicing of the chloroplastic group II intron. Required for the accumulation of 16S and 23S ribosomes. In Zea mays (Maize), this protein is Transcription termination factor MTERF4, chloroplastic.